Here is a 178-residue protein sequence, read N- to C-terminus: MSGGKYVDSEGHLYTVPIREQGNIYKPNNKAMAEEMNEKQVYDAHTKEIDLVNRDPKHLNDDVVKIDFEDVIAEPEGTHSFDGIWKASFTTFTVTKYWFYRLLSALFGIPMALIWGIYFAILSFLHIWAVVPCIKSFLIEIQCISRVYSIYVHTFCDPLFEAIGKIFSNIRINMQKEI.

Serine 2 is modified (N-acetylserine). The residue at position 2 (serine 2) is a Phosphoserine. A required for homooligomerization region spans residues 2–94 (SGGKYVDSEG…WKASFTTFTV (93 aa)). Residues 2–104 (SGGKYVDSEG…TKYWFYRLLS (103 aa)) are Cytoplasmic-facing. At lysine 5 the chain carries N6-acetyllysine; alternate. Residue lysine 5 forms a Glycyl lysine isopeptide (Lys-Gly) (interchain with G-Cter in ubiquitin); alternate linkage. Position 6 is a phosphotyrosine (tyrosine 6). The residue at position 9 (serine 9) is a Phosphoserine. Tyrosine 14 carries the phosphotyrosine; by ABL1 modification. Phosphotyrosine is present on tyrosine 25. Residues lysine 26, lysine 30, lysine 39, lysine 47, and lysine 57 each participate in a glycyl lysine isopeptide (Lys-Gly) (interchain with G-Cter in ubiquitin) cross-link. Residues 82-94 (DGIWKASFTTFTV) form an interaction with CAVIN3 region. Residues 105–125 (ALFGIPMALIWGIYFAILSFL) constitute an intramembrane region (helical). At 126–178 (HIWAVVPCIKSFLIEIQCISRVYSIYVHTFCDPLFEAIGKIFSNIRINMQKEI) the chain is on the cytoplasmic side. An interacts with SPRY1, SPRY2, SPRY3 and SPRY4 region spans residues 131–142 (VPCIKSFLIEIQ). 3 S-palmitoyl cysteine lipidation sites follow: cysteine 133, cysteine 143, and cysteine 156. The tract at residues 149 to 160 (SIYVHTFCDPLF) is interacts with SPRY1, SPRY2, and SPRY4. The interval 167-178 (FSNIRINMQKEI) is interacts with SPRY1, SPRY2, SPRY3 and SPRY4.

This sequence belongs to the caveolin family. In terms of assembly, homooligomer. Interacts with GLIPR2. Interacts with NOSTRIN. Interacts with SNAP25 and STX1A. Interacts (via the N-terminus) with DPP4; the interaction is direct. Interacts with CTNNB1, CDH1 and JUP. Interacts with PACSIN2; this interaction induces membrane tubulation. Interacts with SLC7A9. Interacts with BMX and BTK. Interacts with TGFBR1. Interacts with CAVIN3 (via leucine-zipper domain) in a cholesterol-sensitive manner. Interacts with CAVIN1. Interacts with EHD2 in a cholesterol-dependent manner. Forms a ternary complex with UBXN6 and VCP; mediates CAV1 targeting to lysosomes for degradation. Interacts with ABCG1; this interaction regulates ABCG1-mediated cholesterol efflux. Interacts with NEU3; this interaction enhances NEU3 sialidase activity within caveola. Interacts (via C-terminus) with SPRY1, SPRY2 (via C-terminus), SPRY3, and SPRY4. Interacts with IGFBP5; this interaction allows trafficking of IGFBP5 from the plasma membrane to the nucleus. In terms of processing, phosphorylated at Tyr-14 by ABL1 in response to oxidative stress. Post-translationally, ubiquitinated. Undergo monoubiquitination and multi- and/or polyubiquitination. Monoubiquitination of N-terminal lysines promotes integration in a ternary complex with UBXN6 and VCP which promotes oligomeric CAV1 targeting to lysosomes for degradation. Ubiquitinated by ZNRF1; leading to degradation and modulation of the TLR4-mediated immune response.

It is found in the golgi apparatus membrane. Its subcellular location is the cell membrane. The protein localises to the membrane. It localises to the caveola. The protein resides in the membrane raft. In terms of biological role, may act as a scaffolding protein within caveolar membranes. Forms a stable heterooligomeric complex with CAV2 that targets to lipid rafts and drives caveolae formation. Mediates the recruitment of CAVIN proteins (CAVIN1/2/3/4) to the caveolae. Interacts directly with G-protein alpha subunits and can functionally regulate their activity. Involved in the costimulatory signal essential for T-cell receptor (TCR)-mediated T-cell activation. Its binding to DPP4 induces T-cell proliferation and NF-kappa-B activation in a T-cell receptor/CD3-dependent manner. Recruits CTNNB1 to caveolar membranes and may regulate CTNNB1-mediated signaling through the Wnt pathway. Negatively regulates TGFB1-mediated activation of SMAD2/3 by mediating the internalization of TGFBR1 from membrane rafts leading to its subsequent degradation. Binds 20(S)-hydroxycholesterol (20(S)-OHC). The protein is Caveolin-1 (CAV1) of Muntiacus muntjak (Barking deer).